A 315-amino-acid chain; its full sequence is Large ribosomal subunit protein uL10 (315 aa).

Residues 285-294 are compositionally biased toward low complexity; it reads AAAPAASAAP. The disordered stretch occupies residues 285 to 315; it reads AAAPAASAAPAKEEKEESEESDDDMGFGLFD. The span at 300–309 shows a compositional bias: acidic residues; sequence EESEESDDDM.

Belongs to the universal ribosomal protein uL10 family. As to quaternary structure, P0 forms a pentameric complex by interaction with dimers of P1 and P2. Post-translationally, phosphorylated.

Ribosomal protein P0 is the functional equivalent of E.coli protein L10. This chain is Large ribosomal subunit protein uL10 (RPLP0), found in Lithobates sylvaticus (Wood frog).